The sequence spans 575 residues: Carboxylesterase 5A (575 aa).

The signal sequence occupies residues 1–28; it reads MSGDWVRPGQALIWVIWIFGAIIEGSVT. Residues C94 and C121 are joined by a disulfide bond. N134 carries N-linked (GlcNAc...) asparagine glycosylation. Residue S226 is the Acyl-ester intermediate of the active site. C280 and C291 are oxidised to a cystine. The N-linked (GlcNAc...) asparagine glycan is linked to N281. E345 functions as the Charge relay system in the catalytic mechanism. N-linked (GlcNAc...) asparagine glycosylation is present at N363. H454 acts as the Charge relay system in catalysis. N524 carries N-linked (GlcNAc...) asparagine glycosylation.

Belongs to the type-B carboxylesterase/lipase family. N-glycosylated.

The protein resides in the secreted. It catalyses the reaction a carboxylic ester + H2O = an alcohol + a carboxylate + H(+). Involved in the detoxification of xenobiotics and in the activation of ester and amide prodrugs. This chain is Carboxylesterase 5A (Ces5a), found in Mus musculus (Mouse).